Reading from the N-terminus, the 1098-residue chain is Protein translocase subunit SecA (1098 aa).

ATP contacts are provided by residues glutamine 176, 194-198 (GEGKT), and aspartate 696. Residues 1024 to 1098 (EPEQVREAAP…KYKNCHGQNA (75 aa)) form a disordered region. Composition is skewed to basic and acidic residues over residues 1041–1051 (QYREEKQDLSD) and 1058–1077 (AEHD…KTVG). Zn(2+) is bound by residues cysteine 1082, cysteine 1084, cysteine 1093, and histidine 1094.

This sequence belongs to the SecA family. Monomer and homodimer. Part of the essential Sec protein translocation apparatus which comprises SecA, SecYEG and auxiliary proteins SecDF. Other proteins may also be involved. It depends on Zn(2+) as a cofactor.

The protein localises to the cell inner membrane. It localises to the cytoplasm. The enzyme catalyses ATP + H2O + cellular proteinSide 1 = ADP + phosphate + cellular proteinSide 2.. Part of the Sec protein translocase complex. Interacts with the SecYEG preprotein conducting channel. Has a central role in coupling the hydrolysis of ATP to the transfer of proteins into and across the cell membrane, serving as an ATP-driven molecular motor driving the stepwise translocation of polypeptide chains across the membrane. The polypeptide is Protein translocase subunit SecA (Phocaeicola vulgatus (strain ATCC 8482 / DSM 1447 / JCM 5826 / CCUG 4940 / NBRC 14291 / NCTC 11154) (Bacteroides vulgatus)).